A 305-amino-acid chain; its full sequence is Nucleotide-binding protein Mpe_A3336 (305 aa).

ATP is bound at residue 22-29 (GISGSGKS). 74-77 (DVRS) is a GTP binding site.

Belongs to the RapZ-like family.

Its function is as follows. Displays ATPase and GTPase activities. In Methylibium petroleiphilum (strain ATCC BAA-1232 / LMG 22953 / PM1), this protein is Nucleotide-binding protein Mpe_A3336.